Consider the following 317-residue polypeptide: Taste receptor type 2 member 14 (317 aa).

Residues 1 to 7 are Extracellular-facing; that stretch reads MGGVIKS. A helical membrane pass occupies residues 8–28; the sequence is IFTFVLIVEFIIGNLGNSFIA. Residues 29-55 are Cytoplasmic-facing; the sequence is LVNCIDWVKGRKISSVDRILTALAISK. A helical transmembrane segment spans residues 56–76; that stretch reads ISLVWLIFGSWCVSVFFPALF. The Extracellular segment spans residues 77–87; that stretch reads ATEKMFRMLTN. Residues threonine 86 and tryptophan 89 each coordinate cholesterol. Residues 88-108 form a helical membrane-spanning segment; sequence IWTVINHFSVWLATGLGTFYF. Over 109-129 the chain is Cytoplasmic; the sequence is LKIANFSNSIFLYLKWRVKKV. Residues 130-150 traverse the membrane as a helical segment; that stretch reads VLVLLLVTSVFLFLNIALINI. Over 151–184 the chain is Extracellular; that stretch reads HINASINGYRRNKTCSSDSSNFTRFSSLIVLTST. N-linked (GlcNAc...) asparagine glycans are attached at residues asparagine 153, asparagine 162, and asparagine 171. Valine 180 is a cholesterol binding site. Residues 185–205 form a helical membrane-spanning segment; that stretch reads VFIFIPFTLSLAMFLLLIFSM. At 206-232 the chain is on the cytoplasmic side; that stretch reads WKHRKKMQHTVKRSGDASTKAHRGVKS. Residues 233–253 form a helical membrane-spanning segment; it reads MMTFFLLYAIFSLSFFISVWT. At 254–261 the chain is on the extracellular side; that stretch reads SERLEENL. The helical transmembrane segment at 262 to 282 threads the bilayer; it reads IILSQVMGMAYPSCHSCVLIL. Cholesterol is bound by residues serine 265 and methionine 268. Residues 283–317 lie on the Cytoplasmic side of the membrane; that stretch reads GNKKLRQASLSVLLWLRYMFKDGEPSGHKEFRESS.

It belongs to the G-protein coupled receptor T2R family. As to quaternary structure, core component of the TAS2R14-GNAI1 complex, consisting of TAS2R14, GNAI1, GNB1 and GNG2; within the complex interacts with GNAI1. Core component of the TAS2R14-GNAT3 complex, consisting of TAS2R14, GNAT3, GNB1 and GNG2; within the complex interacts with GNAT3. Core component of the TAS2R14-GNAS2 complex, consisting of TAS2R14, GNAS2, GNB1 and GNG2; within the complex interacts with GNAS2.

It is found in the membrane. It carries out the reaction Ca(2+)(in) = Ca(2+)(out). The enzyme catalyses 3',5'-cyclic AMP(in) = 3',5'-cyclic AMP(out). Its activity is regulated as follows. Basal activity is enhanced by binding to bitter tastants, such as flufenamic acid and aristolochic acid. Regulated by cholesterol in a concentration-dependent manner. In terms of biological role, gustducin-linked G-protein coupled receptor that plays a role in the perception of bitterness. The activity of this receptor stimulates GNAT3, activating the gustducin G-protein pathway. Likely plays a role in sensing the chemical composition of the gastrointestinal content and other extra-oral tissues via the inhibitory G-protein pathways. This is Taste receptor type 2 member 14 (TAS2R14) from Pan paniscus (Pygmy chimpanzee).